The primary structure comprises 320 residues: Cytochrome f (320 aa).

A signal peptide spans 1 to 35 (MENRKTFSWLKEQMIRSISVSIMIYVITRTSISNA). Positions 36, 56, 59, and 60 each coordinate heme. A helical membrane pass occupies residues 286–306 (VQGLLFFFASVILAQVFLVLK).

Belongs to the cytochrome f family. As to quaternary structure, the 4 large subunits of the cytochrome b6-f complex are cytochrome b6, subunit IV (17 kDa polypeptide, petD), cytochrome f and the Rieske protein, while the 4 small subunits are PetG, PetL, PetM and PetN. The complex functions as a dimer. Heme is required as a cofactor.

The protein resides in the plastid. It is found in the chloroplast thylakoid membrane. In terms of biological role, component of the cytochrome b6-f complex, which mediates electron transfer between photosystem II (PSII) and photosystem I (PSI), cyclic electron flow around PSI, and state transitions. This Saccharum hybrid (Sugarcane) protein is Cytochrome f.